A 293-amino-acid polypeptide reads, in one-letter code: Elongation factor Ts (293 aa).

Residues 80–83 form an involved in Mg(2+) ion dislocation from EF-Tu region; that stretch reads TDFV.

This sequence belongs to the EF-Ts family.

It localises to the cytoplasm. In terms of biological role, associates with the EF-Tu.GDP complex and induces the exchange of GDP to GTP. It remains bound to the aminoacyl-tRNA.EF-Tu.GTP complex up to the GTP hydrolysis stage on the ribosome. This chain is Elongation factor Ts, found in Burkholderia ambifaria (strain MC40-6).